Here is a 283-residue protein sequence, read N- to C-terminus: 4-diphosphocytidyl-2-C-methyl-D-erythritol kinase (283 aa).

K10 is a catalytic residue. Residue 99 to 109 (PMGGGLGGGSS) participates in ATP binding. Residue D141 is part of the active site.

Belongs to the GHMP kinase family. IspE subfamily. In terms of assembly, homodimer.

It carries out the reaction 4-CDP-2-C-methyl-D-erythritol + ATP = 4-CDP-2-C-methyl-D-erythritol 2-phosphate + ADP + H(+). The protein operates within isoprenoid biosynthesis; isopentenyl diphosphate biosynthesis via DXP pathway; isopentenyl diphosphate from 1-deoxy-D-xylulose 5-phosphate: step 3/6. Its function is as follows. Catalyzes the phosphorylation of the position 2 hydroxy group of 4-diphosphocytidyl-2C-methyl-D-erythritol. This is 4-diphosphocytidyl-2-C-methyl-D-erythritol kinase from Escherichia coli O9:H4 (strain HS).